The chain runs to 100 residues: Large ribosomal subunit protein uL23 (100 aa).

This sequence belongs to the universal ribosomal protein uL23 family. As to quaternary structure, part of the 50S ribosomal subunit. Contacts protein L29, and trigger factor when it is bound to the ribosome.

Its function is as follows. One of the early assembly proteins it binds 23S rRNA. One of the proteins that surrounds the polypeptide exit tunnel on the outside of the ribosome. Forms the main docking site for trigger factor binding to the ribosome. In Xylella fastidiosa (strain M23), this protein is Large ribosomal subunit protein uL23.